The following is a 324-amino-acid chain: Autolytic lysozyme (324 aa).

Residues aspartate 5 and glutamate 91 contribute to the active site. 5 consecutive repeat copies span residues 212-234 (LLKR…IKDF), 235-254 (QSIM…SGAA), 255-277 (QQIF…TRYI), 278-300 (QYRV…VAAW), and 301-324 (QSNQ…LDEN). The segment at 212–324 (LLKRGLEVDG…ATWSKLLDEN (113 aa)) is 5 X 23 AA tandem repeats.

Belongs to the glycosyl hydrolase 25 family. Monomer.

The protein localises to the secreted. It localises to the cytoplasm. It catalyses the reaction Hydrolysis of (1-&gt;4)-beta-linkages between N-acetylmuramic acid and N-acetyl-D-glucosamine residues in a peptidoglycan and between N-acetyl-D-glucosamine residues in chitodextrins.. This is Autolytic lysozyme (lyc) from Clostridium acetobutylicum (strain ATCC 824 / DSM 792 / JCM 1419 / IAM 19013 / LMG 5710 / NBRC 13948 / NRRL B-527 / VKM B-1787 / 2291 / W).